We begin with the raw amino-acid sequence, 287 residues long: Phosphatidylserine decarboxylase proenzyme (287 aa).

Active-site charge relay system; for autoendoproteolytic cleavage activity residues include aspartate 89, histidine 146, and serine 252. Serine 252 serves as the catalytic Schiff-base intermediate with substrate; via pyruvic acid; for decarboxylase activity. Serine 252 is subject to Pyruvic acid (Ser); by autocatalysis.

The protein belongs to the phosphatidylserine decarboxylase family. PSD-B subfamily. Prokaryotic type I sub-subfamily. Heterodimer of a large membrane-associated beta subunit and a small pyruvoyl-containing alpha subunit. Requires pyruvate as cofactor. Is synthesized initially as an inactive proenzyme. Formation of the active enzyme involves a self-maturation process in which the active site pyruvoyl group is generated from an internal serine residue via an autocatalytic post-translational modification. Two non-identical subunits are generated from the proenzyme in this reaction, and the pyruvate is formed at the N-terminus of the alpha chain, which is derived from the carboxyl end of the proenzyme. The autoendoproteolytic cleavage occurs by a canonical serine protease mechanism, in which the side chain hydroxyl group of the serine supplies its oxygen atom to form the C-terminus of the beta chain, while the remainder of the serine residue undergoes an oxidative deamination to produce ammonia and the pyruvoyl prosthetic group on the alpha chain. During this reaction, the Ser that is part of the protease active site of the proenzyme becomes the pyruvoyl prosthetic group, which constitutes an essential element of the active site of the mature decarboxylase.

It is found in the cell membrane. It carries out the reaction a 1,2-diacyl-sn-glycero-3-phospho-L-serine + H(+) = a 1,2-diacyl-sn-glycero-3-phosphoethanolamine + CO2. The protein operates within phospholipid metabolism; phosphatidylethanolamine biosynthesis; phosphatidylethanolamine from CDP-diacylglycerol: step 2/2. Its function is as follows. Catalyzes the formation of phosphatidylethanolamine (PtdEtn) from phosphatidylserine (PtdSer). The polypeptide is Phosphatidylserine decarboxylase proenzyme (Shewanella pealeana (strain ATCC 700345 / ANG-SQ1)).